Reading from the N-terminus, the 241-residue chain is Uracil-DNA glycosylase (241 aa).

Residue Asp-73 is the Proton acceptor of the active site.

This sequence belongs to the uracil-DNA glycosylase (UDG) superfamily. UNG family.

It is found in the cytoplasm. It catalyses the reaction Hydrolyzes single-stranded DNA or mismatched double-stranded DNA and polynucleotides, releasing free uracil.. In terms of biological role, excises uracil residues from the DNA which can arise as a result of misincorporation of dUMP residues by DNA polymerase or due to deamination of cytosine. This Agrobacterium fabrum (strain C58 / ATCC 33970) (Agrobacterium tumefaciens (strain C58)) protein is Uracil-DNA glycosylase.